The chain runs to 263 residues: Lens fiber major intrinsic protein (263 aa).

The Cytoplasmic segment spans residues 1-9; sequence MWELRSASF. A helical transmembrane segment spans residues 10–29; it reads WRAIFAEFFATLFYVFFGLG. The Extracellular portion of the chain corresponds to 30–41; that stretch reads SSLRWAPGPLHV. A helical transmembrane segment spans residues 42–59; it reads LQVAMAFGLALATLVQSV. Over 60–61 the chain is Cytoplasmic; sequence GH. The segment at residues 62 to 77 is an intramembrane region (discontinuously helical); sequence ISGAHVNPAVTFAFLV. An NPA 1 motif is present at residues 68–70; the sequence is NPA. Topologically, residues 78 to 82 are cytoplasmic; that stretch reads GSQMS. The chain crosses the membrane as a helical span at residues 83–106; it reads LLRAFCYMAAQLLGAVAGAAVLYS. Topologically, residues 107 to 127 are extracellular; that stretch reads VTPPAVRGNLALNTLHPAVSV. The helical transmembrane segment at 128 to 148 threads the bilayer; that stretch reads GQATTVEIFLTLQFVLCIFAT. At 149 to 156 the chain is on the cytoplasmic side; it reads YDERRNGQ. Residues 157 to 175 traverse the membrane as a helical segment; the sequence is LGSVALAVGFSLALGHLFG. The Extracellular portion of the chain corresponds to 176–178; sequence MYY. Residues 179-193 constitute an intramembrane region (discontinuously helical); sequence TGAGMNPARSFAPAI. The NPA 2 motif lies at 184-186; sequence NPA. Over 194–200 the chain is Extracellular; sequence LTGNFTN. Residues 201–222 traverse the membrane as a helical segment; it reads HWVYWVGPIIGGGLGSLLYDFL. Residues 223 to 263 lie on the Cytoplasmic side of the membrane; sequence LFPRLKSISERLSVLKGAKPDVSNGQPEVTGEPVELNTQAL. Residues 227-237 form an interaction with CALM region; sequence LKSISERLSVL. Phosphoserine is present on residues S235 and S245. A deamidated asparagine; by deterioration mark is found at N246 and N259.

Belongs to the MIP/aquaporin (TC 1.A.8) family. In terms of assembly, homotetramer; each monomer provides an independent water pore. Two homotetramers on opposing membranes can dimerize, forming a cell-cell junction. Interacts with CALM; the calcium-calmodulin/CALM complex interacts with the cytoplasmic domains of two aquaporins, leading to channel closure. Interacts with BFSP1 (via C-terminus); prevents calcium-dependent inhibition of the water channel activity. In terms of processing, subject to partial proteolytic cleavage in the eye lens core. Partial proteolysis promotes interactions between tetramers from adjoining membranes. Fatty acylated at Met-1 and Lys-238. The acyl modifications, in decreasing order of ion abundance, are: oleoyl (C18:1) &gt; palmitoyl (C16:0) &gt; stearoyl (C18:0) &gt; eicosenoyl (C20:1) &gt; dihomo-gamma-linolenoyl (C20:3) &gt; palmitoleoyl (C16:1) &gt; eicosadienoyl (C20:2). As to expression, expressed in the cortex and nucleus of the retina lens (at protein level). Major component of lens fiber gap junctions.

The protein localises to the cell membrane. It is found in the cell junction. The enzyme catalyses H2O(in) = H2O(out). With respect to regulation, the water channel activity is inhibited by calcium through calmodulin/CALM. Aquaporins form homotetrameric transmembrane channels, with each monomer independently mediating water transport across the plasma membrane along its osmotic gradient. Specifically expressed in lens fiber cells, this aquaporin is crucial for maintaining lens water homeostasis and transparency. Beyond water permeability, it also acts as a cell-to-cell adhesion molecule, forming thin junctions between lens fiber cells that are essential for maintaining the ordered structure and transparency of the lens. The sequence is that of Lens fiber major intrinsic protein from Homo sapiens (Human).